The chain runs to 142 residues: Maximins y/Hv type 1 (142 aa).

Positions 1–18 (MNFKYIVAVSFLIASGYA) are cleaved as a signal peptide. Residues 19-43 (RSEENDVQSLSQREVLEEESLREIR) constitute a propeptide that is removed on maturation. Phe68 is subject to Phenylalanine amide. Positions 72 to 121 (TAEDHEVMKRLEAVMRDLDSLDHPEEASERETRGFNQEEIANLFTKKEKR) are excised as a propeptide. Ile141 is subject to Isoleucine amide.

This sequence belongs to the bombinin family. In terms of tissue distribution, expressed by the skin glands.

It is found in the secreted. Maximin-y shows antimicrobial activity against bacteria and against the fungus C.albicans. It has little hemolytic activity. Its function is as follows. Maximin-Hv shows antimicrobial activity against bacteria and against the fungus C.albicans. Shows strong hemolytic activity. This is Maximins y/Hv type 1 from Bombina maxima (Giant fire-bellied toad).